Consider the following 144-residue polypeptide: 3-dehydroquinate dehydratase (144 aa).

Y23 serves as the catalytic Proton acceptor. N74, H80, and D87 together coordinate substrate. H101 acts as the Proton donor in catalysis. Substrate is bound by residues 102–103 and R112; that span reads LS.

The protein belongs to the type-II 3-dehydroquinase family. In terms of assembly, homododecamer.

It carries out the reaction 3-dehydroquinate = 3-dehydroshikimate + H2O. It participates in metabolic intermediate biosynthesis; chorismate biosynthesis; chorismate from D-erythrose 4-phosphate and phosphoenolpyruvate: step 3/7. Catalyzes a trans-dehydration via an enolate intermediate. The chain is 3-dehydroquinate dehydratase from Mesorhizobium japonicum (strain LMG 29417 / CECT 9101 / MAFF 303099) (Mesorhizobium loti (strain MAFF 303099)).